Reading from the N-terminus, the 450-residue chain is Phosphoglucosamine mutase (450 aa).

Ser102 (phosphoserine intermediate) is an active-site residue. Mg(2+) contacts are provided by Ser102, Asp243, Asp245, and Asp247. Ser102 carries the phosphoserine modification.

Belongs to the phosphohexose mutase family. The cofactor is Mg(2+). Post-translationally, activated by phosphorylation.

The catalysed reaction is alpha-D-glucosamine 1-phosphate = D-glucosamine 6-phosphate. In terms of biological role, catalyzes the conversion of glucosamine-6-phosphate to glucosamine-1-phosphate. The protein is Phosphoglucosamine mutase of Allorhizobium ampelinum (strain ATCC BAA-846 / DSM 112012 / S4) (Agrobacterium vitis (strain S4)).